Consider the following 454-residue polypeptide: Glutamine synthetase (454 aa).

A GS beta-grasp domain is found at 19-111 (NNVKFIRFQF…VICDVYKDEK (93 aa)). The 337-residue stretch at 118–454 (PRSRLKAILE…DWETGKYLIY (337 aa)) folds into the GS catalytic domain. 2 residues coordinate Mg(2+): glutamate 142 and glutamate 144. Residue glutamate 194 coordinates ATP. Mg(2+)-binding residues include glutamate 199 and glutamate 206. L-glutamate contacts are provided by residues 250-251 (NG) and glycine 251. Histidine 255 provides a ligand contact to Mg(2+). ATP-binding positions include 257 to 259 (HQS) and serine 259. Positions 309, 315, and 327 each coordinate L-glutamate. Residues arginine 327, arginine 332, and lysine 339 each coordinate ATP. Glutamate 344 is a Mg(2+) binding site. Arginine 346 contributes to the L-glutamate binding site.

The protein belongs to the glutamine synthetase family. Oligomer of 12 subunits arranged in the form of two hexagons. Requires Mg(2+) as cofactor.

The protein localises to the cytoplasm. It carries out the reaction L-glutamate + NH4(+) + ATP = L-glutamine + ADP + phosphate + H(+). Its activity is regulated as follows. Feedback inhibited by glycine and alanine, and inhibited by low concentrations of methionine sulfoximine. In terms of biological role, probably involved in nitrogen metabolism via ammonium assimilation. Catalyzes the ATP-dependent biosynthesis of glutamine from glutamate and ammonia. Beta-glutamate is a much poorer substrate than alpha-glutamate. This chain is Glutamine synthetase, found in Methanocaldococcus jannaschii (strain ATCC 43067 / DSM 2661 / JAL-1 / JCM 10045 / NBRC 100440) (Methanococcus jannaschii).